Consider the following 581-residue polypeptide: Chaperonin GroEL 1 (581 aa).

ATP-binding positions include 29 to 32 (TIGP), 86 to 90 (DGTTT), glycine 413, and aspartate 492.

This sequence belongs to the chaperonin (HSP60) family. Forms a cylinder of 14 subunits composed of two heptameric rings stacked back-to-back. Interacts with the co-chaperonin GroES.

It localises to the cytoplasm. The catalysed reaction is ATP + H2O + a folded polypeptide = ADP + phosphate + an unfolded polypeptide.. Together with its co-chaperonin GroES, plays an essential role in assisting protein folding. The GroEL-GroES system forms a nano-cage that allows encapsulation of the non-native substrate proteins and provides a physical environment optimized to promote and accelerate protein folding. This chain is Chaperonin GroEL 1, found in Prochlorococcus marinus subsp. pastoris (strain CCMP1986 / NIES-2087 / MED4).